We begin with the raw amino-acid sequence, 147 residues long: Augurin (147 aa).

An N-terminal signal peptide occupies residues 1-31 (MANSSARPAFLVMTALALLLLLCVGPGGISG). 2 consecutive propeptides follow at residues 32-68 (NKLK…LRRP) and 132-147 (SAHS…YDDY).

The protein belongs to the augurin family.

Its subcellular location is the secreted. The protein localises to the cytoplasm. It localises to the apical cell membrane. Functionally, probable hormone that may attenuate cell proliferation and induce senescence of oligodendrocyte and neural precursor cells in the central nervous system. ECRG4-induced senescence is characterized by G1 arrest, RB1 dephosphorylation and accelerated CCND1 and CCND3 proteasomal degradation. This chain is Augurin, found in Bos taurus (Bovine).